Reading from the N-terminus, the 564-residue chain is Rho guanine nucleotide exchange factor 9 (564 aa).

The SH3 domain maps to 8–67; sequence DSIVSAEAVWDHATMANRELAFKAGDVIKVLDASNKDWWWGQIDDEEGWFPASFVRLWVN. The interval 100-110 is interaction with GPHN; that stretch reads RDQMRANVINE. Positions 103 to 287 constitute a DH domain; it reads MRANVINEIM…RNVTQQINER (185 aa). In terms of domain architecture, PH spans 318–425; it reads ELIYTGEMAW…WLRAFREERK (108 aa). The disordered stretch occupies residues 451-470; sequence KVPKQKGVNSARSVPPSYPP. A Phosphoserine modification is found at Ser-502.

As to quaternary structure, interacts with GPHN.

It is found in the cytoplasm. Its subcellular location is the postsynaptic density. Its function is as follows. Acts as a guanine nucleotide exchange factor (GEF) for CDC42. Promotes formation of GPHN clusters. The sequence is that of Rho guanine nucleotide exchange factor 9 (ARHGEF9) from Pongo abelii (Sumatran orangutan).